Here is a 421-residue protein sequence, read N- to C-terminus: Acetate kinase (421 aa).

Mg(2+) is bound at residue Asn-7. Lys-14 contributes to the ATP binding site. Substrate is bound at residue Arg-91. Asp-148 acts as the Proton donor/acceptor in catalysis. ATP-binding positions include 208-212 (HIGNG) and 283-285 (DRR). Glu-387 provides a ligand contact to Mg(2+).

Belongs to the acetokinase family. Homodimer. Requires Mg(2+) as cofactor. The cofactor is Mn(2+).

The protein resides in the cytoplasm. It catalyses the reaction acetate + ATP = acetyl phosphate + ADP. The protein operates within metabolic intermediate biosynthesis; acetyl-CoA biosynthesis; acetyl-CoA from acetate: step 1/2. Catalyzes the formation of acetyl phosphate from acetate and ATP. Can also catalyze the reverse reaction. The polypeptide is Acetate kinase (Geobacter metallireducens (strain ATCC 53774 / DSM 7210 / GS-15)).